The primary structure comprises 647 residues: Threonine--tRNA ligase (647 aa).

The 63-residue stretch at 1–63 folds into the TGS domain; it reads MYMIQLTFPD…EHDGKIELVM (63 aa). The tract at residues 247-544 is catalytic; sequence DHRKLGKELD…LIEEYKGAFP (298 aa). Zn(2+) is bound by residues Cys340, His391, and His521.

This sequence belongs to the class-II aminoacyl-tRNA synthetase family. As to quaternary structure, homodimer. Zn(2+) serves as cofactor.

Its subcellular location is the cytoplasm. The catalysed reaction is tRNA(Thr) + L-threonine + ATP = L-threonyl-tRNA(Thr) + AMP + diphosphate + H(+). Functionally, catalyzes the attachment of threonine to tRNA(Thr) in a two-step reaction: L-threonine is first activated by ATP to form Thr-AMP and then transferred to the acceptor end of tRNA(Thr). Also edits incorrectly charged L-seryl-tRNA(Thr). This is Threonine--tRNA ligase from Exiguobacterium sp. (strain ATCC BAA-1283 / AT1b).